A 208-amino-acid polypeptide reads, in one-letter code: dITP/XTP pyrophosphatase (208 aa).

16–21 provides a ligand contact to substrate; the sequence is TGNAGK. Residues glutamate 46 and aspartate 75 each coordinate Mg(2+). Aspartate 75 functions as the Proton acceptor in the catalytic mechanism. Substrate is bound by residues serine 76, 155–158, lysine 178, and 183–184; these read FGYD and HR.

The protein belongs to the HAM1 NTPase family. In terms of assembly, homodimer. It depends on Mg(2+) as a cofactor.

The catalysed reaction is XTP + H2O = XMP + diphosphate + H(+). It catalyses the reaction dITP + H2O = dIMP + diphosphate + H(+). The enzyme catalyses ITP + H2O = IMP + diphosphate + H(+). In terms of biological role, pyrophosphatase that catalyzes the hydrolysis of nucleoside triphosphates to their monophosphate derivatives, with a high preference for the non-canonical purine nucleotides XTP (xanthosine triphosphate), dITP (deoxyinosine triphosphate) and ITP. Seems to function as a house-cleaning enzyme that removes non-canonical purine nucleotides from the nucleotide pool, thus preventing their incorporation into DNA/RNA and avoiding chromosomal lesions. The protein is dITP/XTP pyrophosphatase of Deinococcus deserti (strain DSM 17065 / CIP 109153 / LMG 22923 / VCD115).